The following is a 178-amino-acid chain: Small ribosomal subunit protein bS16 (178 aa).

A disordered region spans residues 78–178 (KLGITQWTAG…AAPAEGEEQA (101 aa)). The segment covering 91 to 113 (KKGEPGQKAKERAEERAQREADR) has biased composition (basic and acidic residues). The segment covering 114 to 127 (AAAAAEAAAAPAEE) has biased composition (low complexity). A compositionally biased stretch (acidic residues) spans 128-139 (APAEEAPAEEAA). The span at 140–172 (AEAAPEAAAAEEAPAAEAAAEEAAPAAEEAAPA) shows a compositional bias: low complexity.

This sequence belongs to the bacterial ribosomal protein bS16 family.

This Phenylobacterium zucineum (strain HLK1) protein is Small ribosomal subunit protein bS16.